The following is a 588-amino-acid chain: Retrograde regulation protein 2 (588 aa).

It belongs to the GppA/Ppx family.

Required for a novel path of interorganelle communication between mitochondria, peroxisomes and the nucleus, thereby maintaining a functional metabolic interaction between the tricarboxylic acid and glyoxylate cycles. In particular, required for the retrograde expression of the peroxisomal isoform of citrate synthase, CIT2. The sequence is that of Retrograde regulation protein 2 (RTG2) from Saccharomyces cerevisiae (strain ATCC 204508 / S288c) (Baker's yeast).